The following is a 339-amino-acid chain: Phenylalanine--tRNA ligase alpha subunit (339 aa).

Residue Glu254 coordinates Mg(2+).

The protein belongs to the class-II aminoacyl-tRNA synthetase family. Phe-tRNA synthetase alpha subunit type 1 subfamily. Tetramer of two alpha and two beta subunits. It depends on Mg(2+) as a cofactor.

It localises to the cytoplasm. The catalysed reaction is tRNA(Phe) + L-phenylalanine + ATP = L-phenylalanyl-tRNA(Phe) + AMP + diphosphate + H(+). This is Phenylalanine--tRNA ligase alpha subunit from Clostridium kluyveri (strain ATCC 8527 / DSM 555 / NBRC 12016 / NCIMB 10680 / K1).